The following is a 365-amino-acid chain: MALDLRIGNKYRIGRKIGSGSFGDIYLGTNVVSGEEVAIKLESTRAKHPQLEYEYRVYRILSGGVGIPFVRWFGVECDYNAMVMDLLGPSLEDLFNFCNRKFSLKTVLLLADQLISRIEFIHSKSFLHRDIKPDNFLMGIGKRGNQVNIIDFGLAKKYRDHKTHLHIPYRENKNLTGTARYASINTHLGIEQSRRDDLESLGYVLVYFCRGSLPWQGLKATTKKQKYEKIMEKKISTPTEVLCRGFPQEFSIYLNYTRSLRFDDKPDYAYLRKLFRDLFCRQSYEFDYMFDWTLKRKTQQDQQHQQQLQQQLSATPQAINPPPERSSFRNYQKQNFDEKGGDINTTVPVINDPSATGAQYINRPN.

The Protein kinase domain maps to 11 to 279 (YRIGRKIGSG…YLRKLFRDLF (269 aa)). Residues 17-25 (IGSGSFGDI) and Lys-40 contribute to the ATP site. The active-site Proton acceptor is Asp-130. A compositionally biased stretch (low complexity) spans 301–311 (DQQHQQQLQQQ). The interval 301-365 (DQQHQQQLQQ…TGAQYINRPN (65 aa)) is disordered. Residues 343–365 (INTTVPVINDPSATGAQYINRPN) show a composition bias toward polar residues.

The protein belongs to the protein kinase superfamily. CK1 Ser/Thr protein kinase family. Casein kinase I subfamily.

The protein resides in the nucleus. The enzyme catalyses L-seryl-[protein] + ATP = O-phospho-L-seryl-[protein] + ADP + H(+). It catalyses the reaction L-threonyl-[protein] + ATP = O-phospho-L-threonyl-[protein] + ADP + H(+). Involved in DNA repair. Has a probable role in repairing alkylated DNA and may regulate the activity of protein(s) involved in double strand break repair caused by gamma rays. The polypeptide is Casein kinase I homolog hhp1 (hhp1) (Schizosaccharomyces pombe (strain 972 / ATCC 24843) (Fission yeast)).